We begin with the raw amino-acid sequence, 417 residues long: Frizzy aggregation protein FrzCD (417 aa).

Basic and acidic residues predominate over residues 1–11 (MSLDTPNEKPA). Residues 1–34 (MSLDTPNEKPAGKARARKAPASKAGATNAASTSS) form a disordered region. Low complexity predominate over residues 21–34 (ASKAGATNAASTSS). One can recognise a Methyl-accepting transducer domain in the interval 144-380 (AALRLSSSAN…QVVASMAEIE (237 aa)).

This sequence belongs to the methyl-accepting chemotaxis (MCP) protein family. Methylated. Saturated fatty acids capric acid and lauric acid stimulate methylation. Short-chain alcohols, such as isoamyl alcohol, and some other solvents cause demethylation.

It is found in the cytoplasm. In terms of biological role, methyl-accepting taxis protein necessary for the proper aggregation of cells to form fruiting bodies. Frz genes define a system of signal transduction analogous to the enterobacterial chemotaxis systems. The polypeptide is Frizzy aggregation protein FrzCD (frzCD) (Myxococcus xanthus).